A 101-amino-acid polypeptide reads, in one-letter code: MMFEHVLFLSVYLFSIGIYGLITSRNMVRALICLELILNSINLNLVTFSDLFDSRQLKGDIFAIFVIALAAAEAAIGLSILSSIHRNRKSTRINQSNFLNN.

Transmembrane regions (helical) follow at residues Met-2–Ile-22, Ile-32–Phe-52, and Ile-61–Leu-81.

Belongs to the complex I subunit 4L family. As to quaternary structure, NDH is composed of at least 16 different subunits, 5 of which are encoded in the nucleus.

It is found in the plastid. The protein localises to the chloroplast thylakoid membrane. The catalysed reaction is a plastoquinone + NADH + (n+1) H(+)(in) = a plastoquinol + NAD(+) + n H(+)(out). It catalyses the reaction a plastoquinone + NADPH + (n+1) H(+)(in) = a plastoquinol + NADP(+) + n H(+)(out). In terms of biological role, NDH shuttles electrons from NAD(P)H:plastoquinone, via FMN and iron-sulfur (Fe-S) centers, to quinones in the photosynthetic chain and possibly in a chloroplast respiratory chain. The immediate electron acceptor for the enzyme in this species is believed to be plastoquinone. Couples the redox reaction to proton translocation, and thus conserves the redox energy in a proton gradient. The polypeptide is NAD(P)H-quinone oxidoreductase subunit 4L, chloroplastic (Oryza nivara (Indian wild rice)).